A 431-amino-acid polypeptide reads, in one-letter code: MTEFTNFFTKNNIEIKNKKFLLAASGGPDSVALFHMLVNFLPNPSKQLIVAHLDHCLRKDSYLESELLQKLTTAFKIKLIEKSWPVALHPQTGIEAKAREFRYAFLAHTGKKYQVDYLLTAHHGDDLIENILLKFIRSGDVAEMNSLQIVGNLDSMRLLRPLIKYSKDQLLEYDKRNGLDYIEDETNFEDDTLRNRLRHYVVPLLKKETNHLVENAYRFSESAALLSDCQNSFFESLILPIDFGKALRGKKSDLINLNENQLAAFFDYLVYKKWHQRVHFDEIRRRKKATFNKENFQLIFYQDYYYLINRNGLTPIDSKKKKIKLDEKFSLNGKEYLISHDKKIGNLVGYFYGVRTDFLEVGSLPQGSKLRLADGRQTKAKKKFAENGIPLILRPYCLTIWQKENPVYVENVYQNQEYNANFVRYNVYIYL.

Residue 25 to 30 (SGGPDS) coordinates ATP.

It belongs to the tRNA(Ile)-lysidine synthase family.

The protein localises to the cytoplasm. The catalysed reaction is cytidine(34) in tRNA(Ile2) + L-lysine + ATP = lysidine(34) in tRNA(Ile2) + AMP + diphosphate + H(+). Ligates lysine onto the cytidine present at position 34 of the AUA codon-specific tRNA(Ile) that contains the anticodon CAU, in an ATP-dependent manner. Cytidine is converted to lysidine, thus changing the amino acid specificity of the tRNA from methionine to isoleucine. In Lactobacillus gasseri (strain ATCC 33323 / DSM 20243 / BCRC 14619 / CIP 102991 / JCM 1131 / KCTC 3163 / NCIMB 11718 / NCTC 13722 / AM63), this protein is tRNA(Ile)-lysidine synthase.